Reading from the N-terminus, the 259-residue chain is Cobalt transport protein CbiM (259 aa).

A signal peptide spans 1–25 (MFRRTTWLTLYLLLAMAALARPAFA). The next 6 membrane-spanning stretches (helical) occupy residues 31–51 (GFLP…FWIW), 68–88 (MLLG…LPSV), 100–120 (LGAV…VLLF), 132–152 (TLGA…YGLY), 160–180 (GSMP…TYVT), and 206–226 (IFAV…VIVF).

It belongs to the CbiM family. In terms of assembly, forms an energy-coupling factor (ECF) transporter complex composed of an ATP-binding protein (A component, CbiO), a transmembrane protein (T component, CbiQ) and 2 possible substrate-capture proteins (S components, CbiM and CbiN) of unknown stoichimetry.

The protein resides in the cell membrane. It functions in the pathway cofactor biosynthesis; adenosylcobalamin biosynthesis. Part of the energy-coupling factor (ECF) transporter complex CbiMNOQ involved in cobalt import. The sequence is that of Cobalt transport protein CbiM from Moorella thermoacetica (strain ATCC 39073 / JCM 9320).